The chain runs to 378 residues: Erythronate-4-phosphate dehydrogenase (378 aa).

2 residues coordinate substrate: S45 and T66. The NAD(+) site is built by D146 and T175. R208 is a catalytic residue. D232 serves as a coordination point for NAD(+). E237 is an active-site residue. H254 functions as the Proton donor in the catalytic mechanism. G257 contacts NAD(+). Substrate is bound at residue Y258.

It belongs to the D-isomer specific 2-hydroxyacid dehydrogenase family. PdxB subfamily. As to quaternary structure, homodimer.

The protein localises to the cytoplasm. The enzyme catalyses 4-phospho-D-erythronate + NAD(+) = (R)-3-hydroxy-2-oxo-4-phosphooxybutanoate + NADH + H(+). Its pathway is cofactor biosynthesis; pyridoxine 5'-phosphate biosynthesis; pyridoxine 5'-phosphate from D-erythrose 4-phosphate: step 2/5. Its function is as follows. Catalyzes the oxidation of erythronate-4-phosphate to 3-hydroxy-2-oxo-4-phosphonooxybutanoate. The protein is Erythronate-4-phosphate dehydrogenase of Salmonella dublin (strain CT_02021853).